The primary structure comprises 1710 residues: Phosphatidylinositol 4-phosphate 5-kinase (1710 aa).

One can recognise an EF-hand domain in the interval tyrosine 68–glycine 98. Residues aspartate 76, asparagine 78, aspartate 80, tyrosine 82, and glutamate 87 each coordinate Ca(2+). Disordered regions lie at residues asparagine 139 to asparagine 255, lysine 427 to valine 479, and glycine 895 to asparagine 993. Residues asparagine 140–asparagine 235 are compositionally biased toward low complexity. Polar residues predominate over residues lysine 236–lysine 248. Over residues lysine 427–lysine 444 the composition is skewed to basic residues. Low complexity predominate over residues serine 456–glutamine 468. Residues glutamate 902–aspartate 973 are compositionally biased toward acidic residues. Residues glutamate 974 to proline 987 show a composition bias toward basic and acidic residues. A PIPK domain is found at glutamine 1334–methionine 1709.

The enzyme catalyses a 1,2-diacyl-sn-glycero-3-phospho-(1D-myo-inositol 4-phosphate) + ATP = a 1,2-diacyl-sn-glycero-3-phospho-(1D-myo-inositol-4,5-bisphosphate) + ADP + H(+). With respect to regulation, catalytic activity is increase by myristoylated ARF1. Phosphatidic acid has no effect on catalytic activity. Catalyzes the phosphorylation of phosphatidylinositol 4-phosphate (PtdIns(4)P/PI4P) to form phosphatidylinositol 4,5-bisphosphate (PtdIns(4,5)P2/PIP2), a lipid second messenger that regulates several cellular processes. The protein is Phosphatidylinositol 4-phosphate 5-kinase of Plasmodium falciparum (isolate 3D7).